Here is a 2200-residue protein sequence, read N- to C-terminus: Non-reducing polyketide synthase tpeB (2200 aa).

One can recognise a Starter acyltransferase (SAT) domain in the interval 16 to 255 (FFGDQTVDTL…MDLPLGTPAH (240 aa)). Residues 382-815 (SNMIAIVGQS…GGNNCVLLEE (434 aa)) enclose the Ketosynthase family 3 (KS3) domain. Residues Cys554, His690, and His729 each act as for beta-ketoacyl synthase activity in the active site. One can recognise a Malonyl-CoA:ACP transacylase (MAT) domain in the interval 914-1202 (VFAFTGQGSQ…VLNSFIKATL (289 aa)). The product template (PT) domain stretch occupies residues 1296-1621 (TASLQRVREE…TKRILTTILG (326 aa)). Positions 1300–1433 (QRVREERIQG…CKIRFESKAD (134 aa)) are N-terminal hotdog fold. Residues 1300 to 1617 (QRVREERIQG…FQRLTKRILT (318 aa)) form the PKS/mFAS DH domain. Catalysis depends on His1332, which acts as the Proton acceptor; for dehydratase activity. The C-terminal hotdog fold stretch occupies residues 1462 to 1617 (NGHKLPKPVV…FQRLTKRILT (156 aa)). Residue Asp1522 is the Proton donor; for dehydratase activity of the active site. The segment at 1625–1652 (DHHNSNEVRNGNATTTHTNPPAHATTQS) is disordered. Residues 1636-1650 (NATTTHTNPPAHATT) show a composition bias toward low complexity. Carrier domains are found at residues 1671 to 1748 (TVGE…AELP) and 1791 to 1865 (ANYA…GPNT). O-(pantetheine 4'-phosphoryl)serine is present on residues Ser1708 and Ser1825. Positions 1931-2173 (MFFLPDGTGY…TVPCDHLSIM (243 aa)) are thioesterase (TE) domain.

Requires pantetheine 4'-phosphate as cofactor.

It functions in the pathway secondary metabolite biosynthesis. Functionally, non-reducing polyketide synthase; part of the gene cluster that mediates the biosynthesis of polyesters containing 2,4-dihydroxy-6-(2-hydroxypropyl)benzoate and 3-hydroxybutyrate moieties, such as talapolyester G, 15G256beta and 15G256beta-2; as well as to oxidized derivatives such as 15G256alpha. The biosynthesis of the polyesters probably starts with the formation of the diketide 3-hydroxybutyryl-S-ACP catalyzed by the partially reducing polyketide synthase tpeA. The acceptance of 3-hydroxybutyryl by the non-reducing polyketide synthase tpeB would initiate further elongation and cyclization, catalyzed by KS and PT, respectively, to form 2,4-dihydroxy-6-(2-hydroxyn-propyl)benzoyl-S-ACP intermediate. The TE domain could catalyze lactonization at this step to yield 6-hydroxymellein as a derailment product. The polyesterification process maybe occurs when additional molecules of 3-hydroxybutyryl are transferred to tpeB. Following the first esterification step, an intramolecular cyclization catalyzed by the TE domain of tpeB would give talarodioxadione 1, whereas the ethyl esterification of talapolyester G perhaps happens spontaneously. Further oxidation by the cytochrome P450 monooxygenase tpeC then leads to the formation of oxidized derivatives. This Talaromyces stipitatus (strain ATCC 10500 / CBS 375.48 / QM 6759 / NRRL 1006) (Penicillium stipitatum) protein is Non-reducing polyketide synthase tpeB.